A 149-amino-acid chain; its full sequence is D-aminoacyl-tRNA deacylase (149 aa).

A Gly-cisPro motif, important for rejection of L-amino acids motif is present at residues 137 to 138 (GP).

Belongs to the DTD family. Homodimer.

The protein resides in the cytoplasm. It carries out the reaction glycyl-tRNA(Ala) + H2O = tRNA(Ala) + glycine + H(+). The catalysed reaction is a D-aminoacyl-tRNA + H2O = a tRNA + a D-alpha-amino acid + H(+). In terms of biological role, an aminoacyl-tRNA editing enzyme that deacylates mischarged D-aminoacyl-tRNAs. Also deacylates mischarged glycyl-tRNA(Ala), protecting cells against glycine mischarging by AlaRS. Acts via tRNA-based rather than protein-based catalysis; rejects L-amino acids rather than detecting D-amino acids in the active site. By recycling D-aminoacyl-tRNA to D-amino acids and free tRNA molecules, this enzyme counteracts the toxicity associated with the formation of D-aminoacyl-tRNA entities in vivo and helps enforce protein L-homochirality. The polypeptide is D-aminoacyl-tRNA deacylase (Leuconostoc mesenteroides subsp. mesenteroides (strain ATCC 8293 / DSM 20343 / BCRC 11652 / CCM 1803 / JCM 6124 / NCDO 523 / NBRC 100496 / NCIMB 8023 / NCTC 12954 / NRRL B-1118 / 37Y)).